We begin with the raw amino-acid sequence, 323 residues long: Fatty acid desaturase 4, chloroplastic (323 aa).

Residues 1–77 constitute a chloroplast transit peptide; the sequence is MAVSLPTKYP…PRPNREKLVV (77 aa). The next 2 helical transmembrane spans lie at 101-121 and 131-151; these read WVAA…IGGF and LAGY…HWAI. A Histidine box-1 motif is present at residues 170–173; the sequence is QGHH. Residues 204-224 form a helical membrane-spanning segment; sequence LAFNDPVFHGFVCTFAFCILF. A Histidine box-2 motif is present at residues 229–233; that stretch reads HAWAH. A Histidine box-3 motif is present at residues 258 to 262; the sequence is HAEHH.

The protein belongs to the fatty acid desaturase CarF family. Fe(2+) is required as a cofactor.

It is found in the plastid. Its subcellular location is the chloroplast membrane. It carries out the reaction a 1-acyl-2-hexadecanoyl-glycerolipid + 2 reduced [2Fe-2S]-[ferredoxin] + O2 + 2 H(+) = a 1-acyl-2-[(3E)-hexadec-3-enoyl]-glycerolipid + 2 oxidized [2Fe-2S]-[ferredoxin] + 2 H2O. It functions in the pathway lipid metabolism; fatty acid metabolism. In terms of biological role, fatty acid desaturase involved in the production of chloroplast-specific phosphatidylglycerol molecular species containing 16:1(3E). Catalyzes the formation of a trans double bond introduced close to the carboxyl group of palmitic acid, which is specifically esterified to the sn-2 glyceryl carbon of phosphatidylglycerol. The protein is Fatty acid desaturase 4, chloroplastic of Arabidopsis thaliana (Mouse-ear cress).